The primary structure comprises 882 residues: Nitrogen regulatory protein areA (882 aa).

The span at 1 to 13 (MSGLTLGGGGSGG) shows a compositional bias: gly residues. 7 disordered regions span residues 1 to 75 (MSGL…PDSL), 139 to 191 (KRKE…LTSD), 228 to 257 (SRKD…SEFG), 325 to 344 (NNHS…FGLD), 394 to 422 (STDF…EHSM), 461 to 545 (NQDQ…DMNG), and 579 to 675 (MDTP…GPTT). The segment covering 48-59 (SDFSQLSDDFSF) has biased composition (low complexity). 2 stretches are compositionally biased toward polar residues: residues 156 to 169 (NSVS…QLTS) and 177 to 191 (PTRQ…LTSD). Over residues 325 to 334 (NNHSSSHHNH) the composition is skewed to basic residues. 2 stretches are compositionally biased toward polar residues: residues 394–413 (STDF…STPQ) and 492–503 (QVLNPNDFSTGA). A compositionally biased stretch (basic and acidic residues) spans 604-613 (VRNREQDPRR). Positions 617–642 (ARTTSTPNTAQLLRQSMNANTSHTSP) are enriched in polar residues. The GATA-type zinc-finger motif lies at 676 to 700 (CTNCFTQTTPLWRRNPEGQPLCNAC). The segment at 723 to 871 (RNRSSANSLA…NHSIAGGQGA (149 aa)) is disordered. Over residues 745–759 (KNSVQQTTVTTPTSS) the composition is skewed to low complexity. Residues 795–811 (NPTTSSPGQSRGTSSVQ) show a composition bias toward polar residues. Positions 848–861 (ALAPAMPPAAANPA) are enriched in low complexity.

Its subcellular location is the nucleus. Functionally, major nitrogen regulatory protein. Positively acting regulatory gene of nitrogen metabolite repression. This is Nitrogen regulatory protein areA (areA) from Aspergillus niger.